The chain runs to 488 residues: Bifunctional protein HldE (488 aa).

Positions 1 to 330 (MDRKSIESIF…NAVALAHSDS (330 aa)) are ribokinase. 205 to 208 (NRRE) is an ATP binding site. Asp275 is an active-site residue. Positions 356–488 (FTNGCFDLLH…IIERVLERYS (133 aa)) are cytidylyltransferase.

It in the N-terminal section; belongs to the carbohydrate kinase PfkB family. This sequence in the C-terminal section; belongs to the cytidylyltransferase family. As to quaternary structure, homodimer.

The catalysed reaction is D-glycero-beta-D-manno-heptose 7-phosphate + ATP = D-glycero-beta-D-manno-heptose 1,7-bisphosphate + ADP + H(+). The enzyme catalyses D-glycero-beta-D-manno-heptose 1-phosphate + ATP + H(+) = ADP-D-glycero-beta-D-manno-heptose + diphosphate. It participates in nucleotide-sugar biosynthesis; ADP-L-glycero-beta-D-manno-heptose biosynthesis; ADP-L-glycero-beta-D-manno-heptose from D-glycero-beta-D-manno-heptose 7-phosphate: step 1/4. The protein operates within nucleotide-sugar biosynthesis; ADP-L-glycero-beta-D-manno-heptose biosynthesis; ADP-L-glycero-beta-D-manno-heptose from D-glycero-beta-D-manno-heptose 7-phosphate: step 3/4. Functionally, catalyzes the phosphorylation of D-glycero-D-manno-heptose 7-phosphate at the C-1 position to selectively form D-glycero-beta-D-manno-heptose-1,7-bisphosphate. Its function is as follows. Catalyzes the ADP transfer from ATP to D-glycero-beta-D-manno-heptose 1-phosphate, yielding ADP-D-glycero-beta-D-manno-heptose. The polypeptide is Bifunctional protein HldE (Pelobacter propionicus (strain DSM 2379 / NBRC 103807 / OttBd1)).